A 401-amino-acid polypeptide reads, in one-letter code: Nicotinate phosphoribosyltransferase (401 aa).

The residue at position 221 (H221) is a Phosphohistidine; by autocatalysis.

The protein belongs to the NAPRTase family. Post-translationally, transiently phosphorylated on a His residue during the reaction cycle. Phosphorylation strongly increases the affinity for substrates and increases the rate of nicotinate D-ribonucleotide production. Dephosphorylation regenerates the low-affinity form of the enzyme, leading to product release.

It carries out the reaction nicotinate + 5-phospho-alpha-D-ribose 1-diphosphate + ATP + H2O = nicotinate beta-D-ribonucleotide + ADP + phosphate + diphosphate. The protein operates within cofactor biosynthesis; NAD(+) biosynthesis; nicotinate D-ribonucleotide from nicotinate: step 1/1. In terms of biological role, catalyzes the synthesis of beta-nicotinate D-ribonucleotide from nicotinate and 5-phospho-D-ribose 1-phosphate at the expense of ATP. This is Nicotinate phosphoribosyltransferase from Pectobacterium atrosepticum (strain SCRI 1043 / ATCC BAA-672) (Erwinia carotovora subsp. atroseptica).